Here is a 214-residue protein sequence, read N- to C-terminus: Coiled-coil domain-containing protein 169 (214 aa).

Positions 56–138 (SEWKTRYETQ…YAFRLEQESK (83 aa)) form a coiled coil. The tract at residues 154–214 (MTQVSGSNQV…RSNHLPKLNP (61 aa)) is disordered. Composition is skewed to polar residues over residues 155 to 166 (TQVSGSNQVSKR) and 185 to 195 (HNSMNQKTTNA).

The protein belongs to the CCDC169 family.

In Mus musculus (Mouse), this protein is Coiled-coil domain-containing protein 169 (Ccdc169).